The chain runs to 475 residues: Probable sensor histidine kinase TcrY (475 aa).

Topologically, residues 1-153 are extracellular; sequence MGITAATEMA…NVDATMLQML (153 aa). The chain crosses the membrane as a helical span at residues 154–174; the sequence is IIFGIVTVIALVAATTAGIVI. Residues 175-475 lie on the Cytoplasmic side of the membrane; the sequence is IKRALAPLRR…GWQPLESSPR (301 aa). Residues 176–238 form the HAMP domain; it reads KRALAPLRRV…MLDHIAAALS (63 aa). Residues 253-466 form the Histidine kinase domain; that stretch reads DASHELRTPL…EFAVRLPLDG (214 aa). H256 bears the Phosphohistidine; by autocatalysis mark.

As to quaternary structure, homodimer. A divalent metal cation serves as cofactor. Autophosphorylated.

It is found in the cell membrane. It catalyses the reaction ATP + protein L-histidine = ADP + protein N-phospho-L-histidine.. In terms of biological role, member of the two-component regulatory system TcrY/TcrX. Activates TcrX by phosphorylation. This Mycobacterium tuberculosis (strain ATCC 25618 / H37Rv) protein is Probable sensor histidine kinase TcrY (tcrY).